A 285-amino-acid polypeptide reads, in one-letter code: HTH-type transcriptional regulator MurR (285 aa).

Residues 1-77 enclose the HTH rpiR-type domain; it reads MLYLTKISNA…MALIGEYSAS (77 aa). Residues 37 to 56 constitute a DNA-binding region (H-T-H motif); the sequence is SRQMAKQLGISQSSIVKFAQ. Residues 128–279 enclose the SIS domain; it reads IIEVISKAPF…SLKMIQRSSE (152 aa).

As to quaternary structure, homotetramer.

It functions in the pathway amino-sugar metabolism; N-acetylmuramate degradation [regulation]. Represses the expression of the murPQ operon involved in the uptake and degradation of N-acetylmuramic acid (MurNAc). Binds to two adjacent inverted repeats within the operator region. MurNAc 6-phosphate, the substrate of MurQ, is the specific inducer that weakens binding of MurR to the operator. The chain is HTH-type transcriptional regulator MurR from Shigella boydii serotype 4 (strain Sb227).